Here is a 167-residue protein sequence, read N- to C-terminus: Crossover junction endodeoxyribonuclease RuvC (167 aa).

Catalysis depends on residues D11, E71, and D143. Residues D11, E71, and D143 each coordinate Mg(2+).

The protein belongs to the RuvC family. As to quaternary structure, homodimer which binds Holliday junction (HJ) DNA. The HJ becomes 2-fold symmetrical on binding to RuvC with unstacked arms; it has a different conformation from HJ DNA in complex with RuvA. In the full resolvosome a probable DNA-RuvA(4)-RuvB(12)-RuvC(2) complex forms which resolves the HJ. The cofactor is Mg(2+).

The protein localises to the cytoplasm. The enzyme catalyses Endonucleolytic cleavage at a junction such as a reciprocal single-stranded crossover between two homologous DNA duplexes (Holliday junction).. In terms of biological role, the RuvA-RuvB-RuvC complex processes Holliday junction (HJ) DNA during genetic recombination and DNA repair. Endonuclease that resolves HJ intermediates. Cleaves cruciform DNA by making single-stranded nicks across the HJ at symmetrical positions within the homologous arms, yielding a 5'-phosphate and a 3'-hydroxyl group; requires a central core of homology in the junction. The consensus cleavage sequence is 5'-(A/T)TT(C/G)-3'. Cleavage occurs on the 3'-side of the TT dinucleotide at the point of strand exchange. HJ branch migration catalyzed by RuvA-RuvB allows RuvC to scan DNA until it finds its consensus sequence, where it cleaves and resolves the cruciform DNA. The polypeptide is Crossover junction endodeoxyribonuclease RuvC (Bartonella bacilliformis (strain ATCC 35685 / KC583 / Herrer 020/F12,63)).